The primary structure comprises 377 residues: RIB43A-like with coiled-coils protein 2 (377 aa).

Residues 217–246 (NKNQVVELTERKRQEKQQEQEDNMTEITNL) are a coiled coil. Residues 354–377 (KQMNTASSSQPTEDYFSQFNTRSR) are disordered.

It belongs to the RIB43A family. In terms of assembly, microtubule inner protein component of sperm flagellar doublet microtubules.

Its subcellular location is the cytoplasm. The protein localises to the cytoskeleton. The protein resides in the cilium axoneme. It is found in the flagellum axoneme. Microtubule inner protein (MIP) part of the dynein-decorated doublet microtubules (DMTs) in cilia axoneme, which is required for motile cilia beating. This chain is RIB43A-like with coiled-coils protein 2, found in Mus musculus (Mouse).